We begin with the raw amino-acid sequence, 763 residues long: MSELLSIALFLASVLIYAWKAGRNTWWFAAILAVLGLFVVLNITLYASDYFTGDGINDAVLYTLTNSLTGAGVSKYILPGAGIVLALAAVFSALGWVLRRRRHHPHHFGYSLLALLLALGSVDASPAFRQISELVKSQSRDGDPDFPAYYKEPSKTIPNPQLNLVYIYGESLERTYFDNDAFPDLTPELGALKNEGLDFSHTMQLPGTDYTIAGMVASQCGIPLFAPFEGNASASVSSFFPQNICLGDILKNSGYQNYFVQGANLRFAGKDVFLKSHGFDHLYGAEELKTVVADPSYRNDWGFYDDTVLDEAWKKFEELSRSGQRFSLFTLTVDTHHPDGFISRTCNRKRYDFDGKPNQSFSAVSCSQENIAEFINKIKASPWFKNTVIVVSSDHLAMNNTAWKYLNKQDRNNLFFVLRGDQPQQDTLAVKRNTMDNGATVLDILGGDNFIGLGRSSLSGQSLSEVFLNSKEKILAMKPDIIRLWNFPKEMKDFTVDRDKDMIAFSGSHFRLPLLLRVSDKRVEPLPESEYSAPLRFQLANFAPRDNFVWVDRCYKMAQLWAPELALSTDWCVSQGQLGGQQSIQHVDKAQWKGKTAFKDTVIDMERYKGNVDTLKIVDNDIRYKADSFIFNVAGAPEEVKQFSGISRPESWGRWSNAQLGDEVKIEYNTPLPKKFDLVITAKAFGANANRPIPVRVGKEEQTLVLENEVTTTTLHFDNPSNASTLVIVPPDPVSTNEGNILGHSPRKLGIGMVEIKVVNAEG.

Helical transmembrane passes span 1–21, 26–46, 77–97, and 108–128; these read MSELLSIALFLASVLIYAWKA, WWFAAILAVLGLFVVLNITLY, ILPGAGIVLALAAVFSALGWV, and FGYSLLALLLALGSVDASPAF.

This sequence belongs to the OpgB family.

It localises to the cell inner membrane. The enzyme catalyses a phosphatidylglycerol + a membrane-derived-oligosaccharide D-glucose = a 1,2-diacyl-sn-glycerol + a membrane-derived-oligosaccharide 6-(glycerophospho)-D-glucose.. Its pathway is glycan metabolism; osmoregulated periplasmic glucan (OPG) biosynthesis. In terms of biological role, transfers a phosphoglycerol residue from phosphatidylglycerol to the membrane-bound nascent glucan backbones. The sequence is that of Phosphoglycerol transferase I from Citrobacter koseri (strain ATCC BAA-895 / CDC 4225-83 / SGSC4696).